Here is a 267-residue protein sequence, read N- to C-terminus: Phosphate import ATP-binding protein PstB 2 (267 aa).

The ABC transporter domain occupies 21-262 (LATKDLHVYY…AQCQSTNDYV (242 aa)). 53 to 60 (GPSGCGKS) is a binding site for ATP.

The protein belongs to the ABC transporter superfamily. Phosphate importer (TC 3.A.1.7) family. As to quaternary structure, the complex is composed of two ATP-binding proteins (PstB), two transmembrane proteins (PstC and PstA) and a solute-binding protein (PstS).

It localises to the cell membrane. The catalysed reaction is phosphate(out) + ATP + H2O = ADP + 2 phosphate(in) + H(+). In terms of biological role, part of the ABC transporter complex PstSACB involved in phosphate import. Responsible for energy coupling to the transport system. The polypeptide is Phosphate import ATP-binding protein PstB 2 (Streptococcus pyogenes serotype M1).